A 296-amino-acid chain; its full sequence is Fructose-bisphosphate aldolase class 1 (296 aa).

E175 serves as the catalytic Proton acceptor. The active-site Schiff-base intermediate with dihydroxyacetone-P is K212.

This sequence belongs to the class I fructose-bisphosphate aldolase family.

It carries out the reaction beta-D-fructose 1,6-bisphosphate = D-glyceraldehyde 3-phosphate + dihydroxyacetone phosphate. Its pathway is carbohydrate degradation; glycolysis; D-glyceraldehyde 3-phosphate and glycerone phosphate from D-glucose: step 4/4. The chain is Fructose-bisphosphate aldolase class 1 (fda) from Staphylococcus epidermidis (strain ATCC 12228 / FDA PCI 1200).